A 292-amino-acid chain; its full sequence is UPF0696 protein C11orf68 homolog (292 aa).

The span at 1–10 (MAAAAAAVAG) shows a compositional bias: low complexity. The interval 1-60 (MAAAAAAVAGAGRGGGGGAEPRQERSRARGWAGAERSEGRRMEPGEELEEEDSPGGREDG) is disordered. Positions 35 to 44 (ERSEGRRMEP) are enriched in basic and acidic residues.

It belongs to the UPF0696 family.

The polypeptide is UPF0696 protein C11orf68 homolog (Bos taurus (Bovine)).